The chain runs to 663 residues: Transmembrane 9 superfamily member 2 (663 aa).

The signal sequence occupies residues 1–28; the sequence is MSSRPPASLPARGPRLLLLSLLLLGTVP. Topologically, residues 29–300 are lumenal; sequence GPRPGSAFYL…LESMPHTHIQ (272 aa). Residues 301 to 321 traverse the membrane as a helical segment; it reads WFSIMNSLVIVLFLSGMVAMI. Over 322 to 374 the chain is Cytoplasmic; sequence MLRTLHKDIARYNQMDSTEDAQEEFGWKLVHGDIFRPPRKGMLLSVFLGSGTQ. Residues 375–395 form a helical membrane-spanning segment; the sequence is ILIMTFVTLFFACLGFLSPAN. The Lumenal portion of the chain corresponds to 396–398; the sequence is RGA. Residues 399 to 419 traverse the membrane as a helical segment; that stretch reads LMTCAVVLWVLLGTPAGYVAA. Over 420–437 the chain is Cytoplasmic; that stretch reads RFYKSFGGEKWKTNVLLT. A helical membrane pass occupies residues 438-458; it reads SFLCPGIVFADFFIMNLILWG. At 459–466 the chain is on the lumenal side; it reads EGSSAAIP. The helical transmembrane segment at 467–487 threads the bilayer; it reads FGTLVAILALWFCISVPLTFI. Over 488-522 the chain is Cytoplasmic; that stretch reads GAYFGFKKNAIEHPVRTNQIPRQIPEQSFYTKPLP. Residues 523–543 form a helical membrane-spanning segment; that stretch reads GIIMGGILPFGCIFIQLFFIL. Over 544-554 the chain is Lumenal; it reads NSIWSHQMYYM. A helical membrane pass occupies residues 555–575; sequence FGFLFLVFIILVITCSEATIL. Topologically, residues 576–591 are cytoplasmic; sequence LCYFHLCAEDYHWQWR. The chain crosses the membrane as a helical span at residues 592–612; sequence SFLTSGFTAVYFLVYAIHYFF. Residues 613–631 are Lumenal-facing; the sequence is SKLQITGTASTILYFGYTM. A helical membrane pass occupies residues 632–652; it reads IMVLIFFLFTGTIGFFACFWF. Residues 653 to 663 are Cytoplasmic-facing; sequence VTKIYSVVKVD.

It belongs to the nonaspanin (TM9SF) (TC 9.A.2) family.

The protein resides in the endosome membrane. It localises to the golgi outpost. Its subcellular location is the cytoplasm. The protein localises to the cytoskeleton. It is found in the microtubule organizing center. In the intracellular compartments, may function as a channel or small molecule transporter. In Rattus norvegicus (Rat), this protein is Transmembrane 9 superfamily member 2 (Tm9sf2).